The primary structure comprises 263 residues: Regulatory protein RecX (263 aa).

Belongs to the RecX family.

The protein localises to the cytoplasm. Functionally, modulates RecA activity. The protein is Regulatory protein RecX of Bacillus licheniformis (strain ATCC 14580 / DSM 13 / JCM 2505 / CCUG 7422 / NBRC 12200 / NCIMB 9375 / NCTC 10341 / NRRL NRS-1264 / Gibson 46).